The primary structure comprises 166 residues: MRIDTSELCDVYLDQVDVVEPIFSSFGGVNEFFGKVTTIKCFENNGLIAEILEEQGEGRVLLVDGGGAVRRALIDAELAQLAADNGWEGIIVYGAVRQLSRLENINIGIHALAPIPVGADEDTQGESDIPVNFGGVTFFPEDYVYADLTGIILSQEPLELEELGEE.

It belongs to the RraA family. Homotrimer. Binds to both RNA-binding sites in the C-terminal region of Rne and to RhlB.

The protein resides in the cytoplasm. Its function is as follows. Globally modulates RNA abundance by binding to RNase E (Rne) and regulating its endonucleolytic activity. Can modulate Rne action in a substrate-dependent manner by altering the composition of the degradosome. Modulates RNA-binding and helicase activities of the degradosome. This chain is Regulator of ribonuclease activity A, found in Mannheimia succiniciproducens (strain KCTC 0769BP / MBEL55E).